Consider the following 890-residue polypeptide: DNA mismatch repair protein MutS (890 aa).

646-653 (GPNMAGKS) lines the ATP pocket.

Belongs to the DNA mismatch repair MutS family.

Its function is as follows. This protein is involved in the repair of mismatches in DNA. It is possible that it carries out the mismatch recognition step. This protein has a weak ATPase activity. The sequence is that of DNA mismatch repair protein MutS from Hyphomonas neptunium (strain ATCC 15444).